Here is a 691-residue protein sequence, read N- to C-terminus: Ribonucleoprotein PTB-binding 2 (691 aa).

The span at 1-30 shows a compositional bias: gly residues; it reads MAAAAGDGGGEGGAGLGSAAGLGPGPGLRG. A disordered region spans residues 1 to 47; that stretch reads MAAAAGDGGGEGGAGLGSAAGLGPGPGLRGQGPSAEAHEGAPDPMPA. N-acetylalanine is present on A2. RRM domains follow at residues 69–140, 142–220, and 231–309; these read RKIL…LQPT, ALLC…WMDV, and KCLC…FCAP. 2 disordered regions span residues 492 to 522 and 543 to 574; these read PNQHIAGQAGPGHSNTQEKQPATVGMAEGNF and GHHKQQQSQPKGTEISSGAASKNQTSLLGEPP. Residues 548 to 569 are compositionally biased toward polar residues; that stretch reads QQSQPKGTEISSGAASKNQTSL.

In terms of assembly, interacts with PTBP1 and RAVER1.

The protein resides in the nucleus. Its subcellular location is the cytoplasm. May bind single-stranded nucleic acids. This is Ribonucleoprotein PTB-binding 2 (RAVER2) from Homo sapiens (Human).